An 89-amino-acid chain; its full sequence is Small ribosomal subunit protein uS17 (89 aa).

It belongs to the universal ribosomal protein uS17 family. As to quaternary structure, part of the 30S ribosomal subunit.

One of the primary rRNA binding proteins, it binds specifically to the 5'-end of 16S ribosomal RNA. The polypeptide is Small ribosomal subunit protein uS17 (Stenotrophomonas maltophilia (strain K279a)).